Reading from the N-terminus, the 302-residue chain is Potassium/proton antiporter CemA (302 aa).

The next 4 membrane-spanning stretches (helical) occupy residues 55-75, 187-207, 225-247, and 262-282; these read VFVSIQCLLSLIFIPLIITFL, FVSFGTFALLVIILKPQIIIL, FLLILGTDLLVGFHSPRGWELFL, and FIFLFVATLPVLLDTVFKYWI.

It belongs to the CemA family.

The protein resides in the plastid. Its subcellular location is the chloroplast inner membrane. It carries out the reaction K(+)(in) + H(+)(out) = K(+)(out) + H(+)(in). Contributes to K(+)/H(+) antiport activity by supporting proton efflux to control proton extrusion and homeostasis in chloroplasts in a light-dependent manner to modulate photosynthesis. Prevents excessive induction of non-photochemical quenching (NPQ) under continuous-light conditions. Indirectly promotes efficient inorganic carbon uptake into chloroplasts. The polypeptide is Potassium/proton antiporter CemA (Tupiella akineta (Green alga)).